Here is a 518-residue protein sequence, read N- to C-terminus: Crotonobetaine/carnitine--CoA ligase (518 aa).

This sequence belongs to the ATP-dependent AMP-binding enzyme family.

The enzyme catalyses 4-(trimethylamino)butanoate + ATP + CoA = 4-(trimethylamino)butanoyl-CoA + AMP + diphosphate. It catalyses the reaction crotonobetaine + ATP + CoA = crotonobetainyl-CoA + AMP + diphosphate. The catalysed reaction is (R)-carnitine + ATP + CoA = (R)-carnitinyl-CoA + AMP + diphosphate. The protein operates within amine and polyamine metabolism; carnitine metabolism. Functionally, catalyzes the transfer of CoA to carnitine, generating the initial carnitinyl-CoA needed for the CaiB reaction cycle. Also has activity toward crotonobetaine and gamma-butyrobetaine. In Proteus sp. (strain LE138), this protein is Crotonobetaine/carnitine--CoA ligase.